The primary structure comprises 265 residues: Zwei Ig domain protein zig-1 (265 aa).

A signal peptide spans 1–17 (MKNLLLITFFVVSTVTA). Topologically, residues 18–232 (LGGRGSKSAL…KMVDVRSEFQ (215 aa)) are extracellular. 2 consecutive Ig-like C2-type domains span residues 41-108 (HATD…TPHG) and 120-220 (PVVH…MLLV). N-linked (GlcNAc...) asparagine glycosylation is found at N83 and N193. An intrachain disulfide couples C155 to C202. The chain crosses the membrane as a helical span at residues 233–253 (WVYPLAVILITIFLLVVIIVF). At 254-265 (CEWRNKKSTSKA) the chain is on the cytoplasmic side.

Expressed in neurons and body wall muscles.

It localises to the cell membrane. Probably not involved in maintaining the position of ASI and ASH head neuron cell bodies and ventral nerve cord axons of PVQ, PVP, RMEV, AVK and HSN neurons. This is Zwei Ig domain protein zig-1 from Caenorhabditis elegans.